Reading from the N-terminus, the 183-residue chain is Ribosome-recycling factor (183 aa).

The protein belongs to the RRF family.

It is found in the cytoplasm. In terms of biological role, responsible for the release of ribosomes from messenger RNA at the termination of protein biosynthesis. May increase the efficiency of translation by recycling ribosomes from one round of translation to another. This is Ribosome-recycling factor from Buchnera aphidicola subsp. Baizongia pistaciae (strain Bp).